We begin with the raw amino-acid sequence, 278 residues long: Type II restriction enzyme NgoPII (278 aa).

Belongs to the NgoPII type II restriction endonuclease family.

The catalysed reaction is Endonucleolytic cleavage of DNA to give specific double-stranded fragments with terminal 5'-phosphates.. Functionally, a P subtype restriction enzyme that recognizes the double-stranded sequence 5'-GGCC-3' and cleaves after G-2. The sequence is that of Type II restriction enzyme NgoPII (ngoPIIR) from Neisseria gonorrhoeae.